The primary structure comprises 246 residues: Pyridoxine 5'-phosphate synthase (246 aa).

Asn7 contacts 3-amino-2-oxopropyl phosphate. 9 to 10 provides a ligand contact to 1-deoxy-D-xylulose 5-phosphate; that stretch reads DH. Position 18 (Arg18) interacts with 3-amino-2-oxopropyl phosphate. His43 serves as the catalytic Proton acceptor. 1-deoxy-D-xylulose 5-phosphate is bound by residues Arg45 and His50. The Proton acceptor role is filled by Glu70. Thr100 serves as a coordination point for 1-deoxy-D-xylulose 5-phosphate. His190 serves as the catalytic Proton donor. 3-amino-2-oxopropyl phosphate-binding positions include Gly191 and 212–213; that span reads GH.

This sequence belongs to the PNP synthase family. As to quaternary structure, homooctamer; tetramer of dimers.

Its subcellular location is the cytoplasm. It carries out the reaction 3-amino-2-oxopropyl phosphate + 1-deoxy-D-xylulose 5-phosphate = pyridoxine 5'-phosphate + phosphate + 2 H2O + H(+). It participates in cofactor biosynthesis; pyridoxine 5'-phosphate biosynthesis; pyridoxine 5'-phosphate from D-erythrose 4-phosphate: step 5/5. Functionally, catalyzes the complicated ring closure reaction between the two acyclic compounds 1-deoxy-D-xylulose-5-phosphate (DXP) and 3-amino-2-oxopropyl phosphate (1-amino-acetone-3-phosphate or AAP) to form pyridoxine 5'-phosphate (PNP) and inorganic phosphate. This is Pyridoxine 5'-phosphate synthase from Prochlorococcus marinus (strain SARG / CCMP1375 / SS120).